The chain runs to 2395 residues: Helicase ssl-1 (2395 aa).

Positions 1 to 12 are enriched in low complexity; sequence MPATPVRASSTR. The tract at residues 1–62 is disordered; it reads MPATPVRASS…EKKKKKTSDD (62 aa). One can recognise an HSA domain in the interval 227 to 300; the sequence is LPKCVEPERN…IKEKRKMCAG (74 aa). Over residues 354–363 the composition is skewed to polar residues; sequence LVSSSKSPSI. Disordered regions lie at residues 354–404 and 444–504; these read LVSS…VRQE and EKLE…HGVL. 3 stretches are compositionally biased toward basic and acidic residues: residues 365–375, 394–404, and 444–462; these read SDRDDKDEEFK, KSQKKEDVRQE, and EKLE…NEEK. A coiled-coil region spans residues 388–464; the sequence is TIANAEKSQK…ACGDNEEKME (77 aa). The segment covering 470 to 490 has biased composition (polar residues); that stretch reads SSDAQKPSTSSSDLTAEQLQD. A Helicase ATP-binding domain is found at 570-735; sequence VTLYEKNLNG…WSLMHFLMPT (166 aa). 583–590 is a binding site for ATP; that stretch reads DEMGLGKT. Positions 963 to 982 are disordered; sequence AQPLQNGNSIPQNAPNRPQT. In terms of domain architecture, Helicase C-terminal spans 1196–1342; the sequence is LLRQLYLYKH…ELAIDEAGFT (147 aa). Residues 1452–1476 are a coiled coil; the sequence is KPEFEEECKEAEALIDQKREEWDKN. Disordered regions lie at residues 1615–1706, 1977–2073, 2092–2143, 2276–2306, and 2350–2395; these read ESAA…EEPD, SIQH…RRNA, QSGK…PQQR, QMRS…RPLV, and MQMP…PPQN. Low complexity-rich tracts occupy residues 1647–1669 and 1981–1995; these read QQPT…QQQQ and LQSS…QNLQ. Residues 1996–2019 are compositionally biased toward polar residues; the sequence is NSHNSEQRNNVQNMHQNQYNSSQN. 2 stretches are compositionally biased toward low complexity: residues 2051-2073 and 2092-2114; these read LVQQ…RRNA and QSGK…SSND. Over residues 2115–2129 the composition is skewed to gly residues; that stretch reads GQGGASTVGGGGGGS. Positions 2130–2142 are enriched in low complexity; it reads QQPHQQQQQQPQQ. The span at 2281 to 2299 shows a compositional bias: gly residues; that stretch reads NGGGVGGQGGLQGGPGGPQ. Over residues 2361–2377 the composition is skewed to low complexity; that stretch reads QQQAPPQSSQQASQQAP.

It belongs to the SNF2/RAD54 helicase family. SWR1 subfamily.

Its subcellular location is the nucleus. Its function is as follows. Probable catalytic component of a chromatin-remodeling complex which mediates the ATP-dependent exchange of histone H2A variant H2AV/htz-1 for H2A, leading to transcriptional regulation of selected genes by chromatin remodeling. Involved in foregut development, and may be involved in vulval development. This chain is Helicase ssl-1 (ssl-1), found in Caenorhabditis elegans.